Here is a 112-residue protein sequence, read N- to C-terminus: Thyroid transcription factor 1 (112 aa).

The homeobox DNA-binding region spans R1–A60. The disordered stretch occupies residues Q59–V100. A compositionally biased stretch (gly residues) spans S73–G83. The span at C84–Q93 shows a compositional bias: low complexity.

The protein belongs to the NK-2 homeobox family. Post-translationally, phosphorylated on serine residues.

The protein localises to the nucleus. Transcription factor that binds and activates the promoter of thyroid specific genes such as thyroglobulin, thyroperoxidase, and thyrotropin receptor. Crucial in the maintenance of the thyroid differentiation phenotype. May play a role in lung development and surfactant homeostasis. This chain is Thyroid transcription factor 1 (TITF1), found in Cavia porcellus (Guinea pig).